An 834-amino-acid polypeptide reads, in one-letter code: Ras GTPase-activating protein 3 (834 aa).

2 C2 domains span residues 1–112 and 123–263; these read MAVE…DTWF and VQGK…EAWY. Alanine 2 is subject to N-acetylalanine. At tyrosine 66 the chain carries Phosphotyrosine. Phosphoserine is present on serine 77. Threonine 110 carries the phosphothreonine modification. Residues 346 to 561 enclose the Ras-GAP domain; sequence GRVVPFISAI…DAVKNFLDLI (216 aa). The PH domain occupies 576-677; that stretch reads ILLKEGFMIK…WIDILTKVSQ (102 aa). The Btk-type zinc finger occupies 679–715; that stretch reads NQKRLTVFHPSAYLNGHWLCCRASSDTAAGCTPCTGG. Zn(2+) contacts are provided by histidine 687, cysteine 698, cysteine 699, and cysteine 709. Phosphoserine occurs at positions 809 and 833.

In terms of tissue distribution, high levels in brain, lower in spleen and lung.

Its function is as follows. Inhibitory regulator of the Ras-cyclic AMP pathway. May bind inositol tetrakisphosphate (IP4). This Mus musculus (Mouse) protein is Ras GTPase-activating protein 3 (Rasa3).